Consider the following 412-residue polypeptide: 43 kDa receptor-associated protein of the synapse (412 aa).

Gly-2 is lipidated: N-myristoyl glycine. TPR repeat units lie at residues 6–39, 83–116, 123–156, 163–196, 206–239, 246–279, and 286–319; these read TKQQ…STEL, TEAY…EGGP, GQVC…AHGN, CRVC…VADY, AMSR…ALQH, ALCL…MTEI, and AHVL…ADAV. Tyr-196 bears the Phosphotyrosine mark. Residues 363–403 form an RING-type zinc finger; the sequence is CGLCGESIGDQNSQLQALPCSHLFHLKCLQTNGNRGCPNCK. Ser-405 carries the post-translational modification Phosphoserine.

The protein belongs to the RAPsyn family.

The protein localises to the cell membrane. Its subcellular location is the postsynaptic cell membrane. The protein resides in the cytoplasm. It localises to the cytoskeleton. Functionally, postsynaptic protein required for clustering of nicotinic acetylcholine receptors (nAChRs) at the neuromuscular junction. It may link the receptor to the underlying postsynaptic cytoskeleton, possibly by direct association with actin or spectrin. In Tetronarce californica (Pacific electric ray), this protein is 43 kDa receptor-associated protein of the synapse (RAPSN).